A 117-amino-acid polypeptide reads, in one-letter code: Large ribosomal subunit protein bL20 (117 aa).

It belongs to the bacterial ribosomal protein bL20 family.

In terms of biological role, binds directly to 23S ribosomal RNA and is necessary for the in vitro assembly process of the 50S ribosomal subunit. It is not involved in the protein synthesizing functions of that subunit. The protein is Large ribosomal subunit protein bL20 of Roseiflexus castenholzii (strain DSM 13941 / HLO8).